Reading from the N-terminus, the 316-residue chain is Ribosomal RNA small subunit methyltransferase H (316 aa).

S-adenosyl-L-methionine is bound by residues 35–37 (AGH), aspartate 55, phenylalanine 84, aspartate 105, and glutamine 112.

This sequence belongs to the methyltransferase superfamily. RsmH family.

The protein resides in the cytoplasm. The enzyme catalyses cytidine(1402) in 16S rRNA + S-adenosyl-L-methionine = N(4)-methylcytidine(1402) in 16S rRNA + S-adenosyl-L-homocysteine + H(+). Its function is as follows. Specifically methylates the N4 position of cytidine in position 1402 (C1402) of 16S rRNA. In Streptococcus sanguinis (strain SK36), this protein is Ribosomal RNA small subunit methyltransferase H.